The primary structure comprises 335 residues: Phosphatidylcholine:ceramide cholinephosphotransferase 2 (335 aa).

The next 5 membrane-spanning stretches (helical) occupy residues leucine 60 to isoleucine 80, tryptophan 104 to leucine 124, phenylalanine 136 to proline 156, isoleucine 200 to valine 220, and leucine 229 to valine 249. Histidine 210 is an active-site residue. Catalysis depends on residues histidine 253 and aspartate 257. The helical transmembrane segment at valine 258–methionine 278 threads the bilayer. Residues arginine 279 to glutamine 335 are Cytoplasmic-facing.

It belongs to the sphingomyelin synthase family.

Its subcellular location is the membrane. The enzyme catalyses an N-acylsphing-4-enine + a 1,2-diacyl-sn-glycero-3-phosphocholine = a sphingomyelin + a 1,2-diacyl-sn-glycerol. The catalysed reaction is an N-acyl-15-methylhexadecasphing-4-enine + a 1,2-diacyl-sn-glycero-3-phosphocholine = an N-acyl-15-methylhexadecasphing-4-enine-1-phosphocholine + a 1,2-diacyl-sn-glycerol. The protein operates within lipid metabolism; sphingolipid metabolism. Sphingomyelin synthases (SM synthase or SMS) synthesize the sphingolipid sphingomyelin (SM) through transfer of the phosphatidyl head group of 1,2-diacyl-sn-glycero-3-phosphocholine (phosphatidylcholine, PC) on to the primary hydroxyl of ceramide (N-acylsphingoid base), yielding 1,2-diacyl-sn-glycerol (diacylglycerol, DAG) as a side product. Functions as a bidirectional lipid cholinephosphotransferases capable of converting PC and ceramide to SM and DAG and vice versa depending on the respective levels of ceramide and DAG as phosphocholine acceptors, respectively. This Caenorhabditis elegans protein is Phosphatidylcholine:ceramide cholinephosphotransferase 2 (sms-2).